The primary structure comprises 234 residues: MGQKIHPYGFRLGVTKNWRSRWVAPFEKYPEYIVQDEKIRTLINKHYGHAGISSVEIERLGNKMRVIIWTARPGMIIGKQGAEIERLREEIVKLLKNDYEVRIAIYEVKNPETDAQIVSDSIARQIERRVSYKRAMKQAISRAMRSGAQGIKIAVSGRLGGAEIARREWFVQGKLPLSTLKSDVDYGYSIAVTKYGTIGVKCWIYKGDVEDLQELLPPRGLERAERRPERHANA.

Residues 39 to 109 (IRTLINKHYG…EVRIAIYEVK (71 aa)) enclose the KH type-2 domain.

Belongs to the universal ribosomal protein uS3 family. As to quaternary structure, part of the 30S ribosomal subunit. Forms a tight complex with proteins S10 and S14.

Its function is as follows. Binds the lower part of the 30S subunit head. Binds mRNA in the 70S ribosome, positioning it for translation. The chain is Small ribosomal subunit protein uS3 from Coprothermobacter proteolyticus (strain ATCC 35245 / DSM 5265 / OCM 4 / BT).